Consider the following 183-residue polypeptide: UPF0316 protein BcerKBAB4_3093 (183 aa).

Transmembrane regions (helical) follow at residues 6–26 (LIFV…ILLV), 32–52 (SAAG…GIVF), and 58–78 (WMNI…GGYI).

It belongs to the UPF0316 family.

The protein localises to the cell membrane. This is UPF0316 protein BcerKBAB4_3093 from Bacillus mycoides (strain KBAB4) (Bacillus weihenstephanensis).